A 145-amino-acid chain; its full sequence is UPF0735 ACT domain-containing protein CLD_1535 (145 aa).

One can recognise an ACT domain in the interval threonine 69–methionine 144.

The protein belongs to the UPF0735 family.

The chain is UPF0735 ACT domain-containing protein CLD_1535 from Clostridium botulinum (strain Okra / Type B1).